Consider the following 885-residue polypeptide: Protein kintoun (885 aa).

6 disordered regions span residues 208 to 235, 371 to 390, 607 to 636, 644 to 663, 781 to 806, and 819 to 871; these read LSKNPTAEEKEPHPLEHMYPKKPEADAG, LSREDSGVELNSNGESPVED, ELQQLHHQKKLNKKQRKRNKKQRSLSESAC, EHHEQPMDTLKLPHRKQRSY, RRLSEGDSADYVEVDSTHGSGDQPAH, and NNNH…MMFE. Over residues 213–232 the composition is skewed to basic and acidic residues; it reads TAEEKEPHPLEHMYPKKPEA. S376 is subject to Phosphoserine. Over residues 612–629 the composition is skewed to basic residues; it reads HHQKKLNKKQRKRNKKQR. S784 carries the post-translational modification Phosphoserine. The segment covering 824-837 has biased composition (basic and acidic residues); the sequence is HVKDNKKQSLHDSG. Residues 842–855 are compositionally biased toward low complexity; the sequence is NGSINNKNNHSNEN.

The protein belongs to the PIH1 family. Kintoun subfamily. Interacts with Pp1alpha-96A, Pp1-87B, Pp1-13C and flw.

It is found in the cytoplasm. Required for cytoplasmic pre-assembly of axonemal dyneins, thereby playing a central role in motility in cilia and flagella. Involved in pre-assembly of dynein arm complexes in the cytoplasm before intraflagellar transport loads them for the ciliary compartment. This chain is Protein kintoun, found in Drosophila mojavensis (Fruit fly).